The sequence spans 366 residues: Lysophosphatidic acid receptor 1-A (366 aa).

Residues 1–52 (MASLSEFVSEPISMMSQTSAASESQCYYNETIAFFYNRSGKYLATEWNAVSK) lie on the Extracellular side of the membrane. 2 cysteine pairs are disulfide-bonded: cysteine 26-cysteine 192 and cysteine 190-cysteine 197. Residues asparagine 29 and asparagine 37 are each glycosylated (N-linked (GlcNAc...) asparagine). Lysine 41 contributes to the a 1-acyl-sn-glycero-3-phosphate binding site. A helical membrane pass occupies residues 53–77 (LVMGLGITVCIFIMLANLLVMVAIY). At 78–85 (VNRRFHFP) the chain is on the cytoplasmic side. The helical transmembrane segment at 86-109 (IYYLMANLAAADFFAGLAYFYLMF) threads the bilayer. Residues 110–123 (NTGPNTRRLTVSTW) lie on the Extracellular side of the membrane. Residues 124-146 (LLRQGLIDTSLTASVANLLAIAI) traverse the membrane as a helical segment. Residue 126 to 131 (RQGLID) participates in a 1-acyl-sn-glycero-3-phosphate binding. Residues 147 to 165 (ERHITVFRMQLHTRMSNRR) lie on the Cytoplasmic side of the membrane. A helical transmembrane segment spans residues 166-186 (VVVVIVVIWTVAIVMGAIPSV). Residues 187–206 (GWNCICDLEQCSNMAPLYSD) are Extracellular-facing. The helical transmembrane segment at 207 to 227 (SYLIFWTIFNLVTFVVMVVLY) threads the bilayer. Tryptophan 212 contributes to the a 1-acyl-sn-glycero-3-phosphate binding site. The Cytoplasmic segment spans residues 228–257 (AHIFVYVRQKTMRMSRHSSGPRRNRDTMMS). A helical transmembrane segment spans residues 258–282 (LLKTVVIVLGAFIVCWTPGLVLLLL). The Extracellular portion of the chain corresponds to 283-296 (DICCPQCNILAYEK). Residues cysteine 286 and cysteine 289 are joined by a disulfide bond. Residues 297-317 (FFLLLAEFNSAMNPIIYSYRD) traverse the membrane as a helical segment. Residues 318 to 366 (KEMSATFKQILCCQRTENVNGPTEGSDRSASSLNHTILAGVHSNDHSVV) are Cytoplasmic-facing.

The protein belongs to the G-protein coupled receptor 1 family. In terms of tissue distribution, expressed at high levels in oocytes and at lower levels in brain and spinal cord. Below detection level in lung, heart, kidney, liver, muscle, stomach, and intestine.

It is found in the cell surface. The protein localises to the cell membrane. It localises to the endosome. Functionally, receptor for lysophosphatidic acid (LPA). Plays a role in the reorganization of the actin cytoskeleton, cell migration, differentiation and proliferation, and thereby contributes to the responses to tissue damage and infectious agents. Activates downstream signaling cascades via the G(i)/G(o), G(12)/G(13), and G(q) families of heteromeric G proteins. Signaling inhibits adenylyl cyclase activity and decreases cellular cAMP levels. Signaling triggers an increase of cytoplasmic Ca(2+) levels. Signaling leads to the activation of phospholipase C (PLC) and the formation of inositol 1,4,5-trisphosphate. Signaling mediates activation of down-stream MAP kinases. Contributes to the regulation of cell shape. Promotes Rho-dependent reorganization of the actin cytoskeleton in neuronal cells and neurite retraction. Promotes the activation of Rho and the formation of actin stress fibers. Promotes formation of lamellipodia at the leading edge of migrating cells via activation of Rac. Through its function as lysophosphatidic acid receptor, plays a role in chemotaxis and cell migration, including responses to injury and wounding. Promotes cell proliferation in response to lysophosphatidic acid. This is Lysophosphatidic acid receptor 1-A (lpar1-a) from Xenopus laevis (African clawed frog).